Here is a 664-residue protein sequence, read N- to C-terminus: Glycine--tRNA ligase beta subunit (664 aa).

Belongs to the class-II aminoacyl-tRNA synthetase family. As to quaternary structure, tetramer of two alpha and two beta subunits.

The protein resides in the cytoplasm. The enzyme catalyses tRNA(Gly) + glycine + ATP = glycyl-tRNA(Gly) + AMP + diphosphate. The protein is Glycine--tRNA ligase beta subunit (glyS) of Aquifex aeolicus (strain VF5).